Reading from the N-terminus, the 197-residue chain is CASP-like protein 1B2 (197 aa).

A2 carries the N-acetylalanine modification. Residues 2 to 17 (AREKIVVAGGSTKSWK) are Cytoplasmic-facing. The helical transmembrane segment at 18–38 (LLLGLRVFAFMATLAAAIVMS) threads the bilayer. The Extracellular portion of the chain corresponds to 39 to 69 (LNKETKTLVVATIGTLPIKATLTAKFQDTPA). The chain crosses the membrane as a helical span at residues 70-90 (FVFFVIANVMVSFHNLLMIVL). The Cytoplasmic segment spans residues 91 to 106 (QIFSRKLEYKGVRLLS). Residues 107 to 127 (IAILDMLNATLVSAAANAAVF) traverse the membrane as a helical segment. Residues 128-156 (VAELGKNGNKHAKWNKVCDRFATYCDHGA) are Extracellular-facing. The helical transmembrane segment at 157–177 (GALIAAFAGVILMLLVSSVSI) threads the bilayer. Over 178 to 197 (SRLLINSKHLSTTATTTAVV) the chain is Cytoplasmic.

This sequence belongs to the Casparian strip membrane proteins (CASP) family. In terms of assembly, homodimer and heterodimers.

The protein resides in the cell membrane. The polypeptide is CASP-like protein 1B2 (Arabidopsis lyrata subsp. lyrata (Lyre-leaved rock-cress)).